The primary structure comprises 348 residues: uncharacterized protein (348 aa).

This is an uncharacterized protein from Aquifex aeolicus (strain VF5).